The sequence spans 186 residues: Alkyl hydroperoxide reductase AhpD (186 aa).

Cys-131 serves as the catalytic Proton donor. Cys-131 and Cys-134 are joined by a disulfide. Cys-134 (cysteine sulfenic acid (-SOH) intermediate) is an active-site residue.

Belongs to the AhpD family.

The enzyme catalyses N(6)-[(R)-dihydrolipoyl]-L-lysyl-[lipoyl-carrier protein] + a hydroperoxide = N(6)-[(R)-lipoyl]-L-lysyl-[lipoyl-carrier protein] + an alcohol + H2O. In terms of biological role, antioxidant protein with alkyl hydroperoxidase activity. Required for the reduction of the AhpC active site cysteine residues and for the regeneration of the AhpC enzyme activity. The protein is Alkyl hydroperoxide reductase AhpD of Rhodospirillum centenum (strain ATCC 51521 / SW).